The following is a 234-amino-acid chain: Adenosine 5'-phosphosulfate reductase (234 aa).

[4Fe-4S] cluster-binding residues include Cys-120, Cys-121, Cys-203, and Cys-206. Cys-229 functions as the Nucleophile; cysteine thiosulfonate intermediate in the catalytic mechanism.

Belongs to the PAPS reductase family. CysH subfamily. Requires [4Fe-4S] cluster as cofactor.

Its subcellular location is the cytoplasm. The enzyme catalyses [thioredoxin]-disulfide + sulfite + AMP + 2 H(+) = adenosine 5'-phosphosulfate + [thioredoxin]-dithiol. It functions in the pathway sulfur metabolism; hydrogen sulfide biosynthesis; sulfite from sulfate. Catalyzes the formation of sulfite from adenosine 5'-phosphosulfate (APS) using thioredoxin as an electron donor. The sequence is that of Adenosine 5'-phosphosulfate reductase from Bacillus cereus (strain ATCC 14579 / DSM 31 / CCUG 7414 / JCM 2152 / NBRC 15305 / NCIMB 9373 / NCTC 2599 / NRRL B-3711).